We begin with the raw amino-acid sequence, 112 residues long: UPF0102 protein C8J_0145 (112 aa).

It belongs to the UPF0102 family.

This is UPF0102 protein C8J_0145 from Campylobacter jejuni subsp. jejuni serotype O:6 (strain 81116 / NCTC 11828).